Here is a 241-residue protein sequence, read N- to C-terminus: Demethylmenaquinone methyltransferase (241 aa).

Residues threonine 60, aspartate 81, and 106–107 contribute to the S-adenosyl-L-methionine site; that span reads DA.

This sequence belongs to the class I-like SAM-binding methyltransferase superfamily. MenG/UbiE family.

The catalysed reaction is a 2-demethylmenaquinol + S-adenosyl-L-methionine = a menaquinol + S-adenosyl-L-homocysteine + H(+). It functions in the pathway quinol/quinone metabolism; menaquinone biosynthesis; menaquinol from 1,4-dihydroxy-2-naphthoate: step 2/2. Functionally, methyltransferase required for the conversion of demethylmenaquinol (DMKH2) to menaquinol (MKH2). The chain is Demethylmenaquinone methyltransferase from Staphylococcus aureus (strain MRSA252).